Consider the following 362-residue polypeptide: Chorismate synthase (362 aa).

Arg46 is a binding site for NADP(+). FMN-binding positions include 122–124 (RSS), 238–239 (NA), Gly278, 293–297 (KPTPS), and Arg319.

The protein belongs to the chorismate synthase family. In terms of assembly, homotetramer. FMNH2 serves as cofactor.

It catalyses the reaction 5-O-(1-carboxyvinyl)-3-phosphoshikimate = chorismate + phosphate. The protein operates within metabolic intermediate biosynthesis; chorismate biosynthesis; chorismate from D-erythrose 4-phosphate and phosphoenolpyruvate: step 7/7. Functionally, catalyzes the anti-1,4-elimination of the C-3 phosphate and the C-6 proR hydrogen from 5-enolpyruvylshikimate-3-phosphate (EPSP) to yield chorismate, which is the branch point compound that serves as the starting substrate for the three terminal pathways of aromatic amino acid biosynthesis. This reaction introduces a second double bond into the aromatic ring system. The chain is Chorismate synthase from Campylobacter jejuni subsp. doylei (strain ATCC BAA-1458 / RM4099 / 269.97).